The sequence spans 100 residues: Small ribosomal subunit protein uS14c (100 aa).

This sequence belongs to the universal ribosomal protein uS14 family. Part of the 30S ribosomal subunit.

Its subcellular location is the plastid. The protein resides in the chloroplast. Binds 16S rRNA, required for the assembly of 30S particles. The protein is Small ribosomal subunit protein uS14c of Amborella trichopoda.